The following is a 357-amino-acid chain: DNA replication and repair protein RecF (357 aa).

30–37 (GANGSGKT) is a binding site for ATP.

The protein belongs to the RecF family.

The protein localises to the cytoplasm. In terms of biological role, the RecF protein is involved in DNA metabolism; it is required for DNA replication and normal SOS inducibility. RecF binds preferentially to single-stranded, linear DNA. It also seems to bind ATP. In Salmonella paratyphi A (strain ATCC 9150 / SARB42), this protein is DNA replication and repair protein RecF.